The following is a 252-amino-acid chain: Imidazole glycerol phosphate synthase subunit HisF (252 aa).

Active-site residues include Asp-11 and Asp-130.

The protein belongs to the HisA/HisF family. Heterodimer of HisH and HisF.

Its subcellular location is the cytoplasm. The catalysed reaction is 5-[(5-phospho-1-deoxy-D-ribulos-1-ylimino)methylamino]-1-(5-phospho-beta-D-ribosyl)imidazole-4-carboxamide + L-glutamine = D-erythro-1-(imidazol-4-yl)glycerol 3-phosphate + 5-amino-1-(5-phospho-beta-D-ribosyl)imidazole-4-carboxamide + L-glutamate + H(+). It participates in amino-acid biosynthesis; L-histidine biosynthesis; L-histidine from 5-phospho-alpha-D-ribose 1-diphosphate: step 5/9. IGPS catalyzes the conversion of PRFAR and glutamine to IGP, AICAR and glutamate. The HisF subunit catalyzes the cyclization activity that produces IGP and AICAR from PRFAR using the ammonia provided by the HisH subunit. This is Imidazole glycerol phosphate synthase subunit HisF from Bacillus anthracis (strain CDC 684 / NRRL 3495).